Reading from the N-terminus, the 258-residue chain is Na(+)-translocating NADH-quinone reductase subunit C (258 aa).

Residues 14-34 (LIVVLAVSLICSVIVAGAVVG) traverse the membrane as a helical segment. Serine 226 carries the post-translational modification FMN phosphoryl serine.

The protein belongs to the NqrC family. In terms of assembly, composed of six subunits; NqrA, NqrB, NqrC, NqrD, NqrE and NqrF. Requires FMN as cofactor.

Its subcellular location is the cell inner membrane. The catalysed reaction is a ubiquinone + n Na(+)(in) + NADH + H(+) = a ubiquinol + n Na(+)(out) + NAD(+). Functionally, NQR complex catalyzes the reduction of ubiquinone-1 to ubiquinol by two successive reactions, coupled with the transport of Na(+) ions from the cytoplasm to the periplasm. NqrA to NqrE are probably involved in the second step, the conversion of ubisemiquinone to ubiquinol. This Neisseria meningitidis serogroup A / serotype 4A (strain DSM 15465 / Z2491) protein is Na(+)-translocating NADH-quinone reductase subunit C.